The primary structure comprises 359 residues: Chorismate synthase (359 aa).

NADP(+) is bound by residues arginine 48 and arginine 54. FMN-binding positions include 125–127 (RSS), 243–244 (NA), glycine 283, 298–302 (KPTSS), and arginine 324.

Belongs to the chorismate synthase family. Homotetramer. FMNH2 serves as cofactor.

It catalyses the reaction 5-O-(1-carboxyvinyl)-3-phosphoshikimate = chorismate + phosphate. It functions in the pathway metabolic intermediate biosynthesis; chorismate biosynthesis; chorismate from D-erythrose 4-phosphate and phosphoenolpyruvate: step 7/7. In terms of biological role, catalyzes the anti-1,4-elimination of the C-3 phosphate and the C-6 proR hydrogen from 5-enolpyruvylshikimate-3-phosphate (EPSP) to yield chorismate, which is the branch point compound that serves as the starting substrate for the three terminal pathways of aromatic amino acid biosynthesis. This reaction introduces a second double bond into the aromatic ring system. The chain is Chorismate synthase from Mannheimia succiniciproducens (strain KCTC 0769BP / MBEL55E).